Consider the following 161-residue polypeptide: MSKEEKLAIAAATDGACSGNPGPGGWGALIRFQDGSEIEFGGNSPETTNNRMELQAALFILEKLKNIEFAPSLTIKTDSKYLIDGMEKWMPNWKKKGWKTASGKPVLNQDLWKALDHPELPKIKLQYVKGHSGEKDNDRVDAIAVAFSKGRKIQLKDFANN.

The 145-residue stretch at 5-149 (EKLAIAAATD…VDAIAVAFSK (145 aa)) folds into the RNase H type-1 domain. Asp-14, Glu-53, Asp-78, and Asp-141 together coordinate Mg(2+).

It belongs to the RNase H family. Monomer. It depends on Mg(2+) as a cofactor.

The protein localises to the cytoplasm. It carries out the reaction Endonucleolytic cleavage to 5'-phosphomonoester.. Endonuclease that specifically degrades the RNA of RNA-DNA hybrids. The polypeptide is Ribonuclease H (Prochlorococcus marinus (strain NATL1A)).